An 809-amino-acid chain; its full sequence is LPS-assembly protein LptD (809 aa).

The first 22 residues, 1 to 22, serve as a signal peptide directing secretion; that stretch reads MRRALRLLPLPLSIAICLPAMA.

It belongs to the LptD family. Component of the lipopolysaccharide transport and assembly complex. Interacts with LptE and LptA.

The protein localises to the cell outer membrane. Functionally, together with LptE, is involved in the assembly of lipopolysaccharide (LPS) at the surface of the outer membrane. This chain is LPS-assembly protein LptD, found in Xanthomonas campestris pv. campestris (strain 8004).